The primary structure comprises 859 residues: MSQASAQHTPMMAQYLKIKREHPEVLLFYRMGDFYELFYDDAKRAASLLDITLTQRGQSAGQPIPMAGVPYHSAESYLARLVKSGESVAICEQIGDPATAKGPVERKVVRIVTPGTLHDEALLDARRDNLVLAVHPQGDRWGLAWLELSSGHFSVLEVDGESDLLSEIQRLDPAELLAAESLSLPPALAERPGFRRQSDWLFDLESATRLLCDQFGVADLRGFGCAHLTTALTAAGVLIDYARDTQRSRLPHVTGIAVETRDEAVVIDAASRRNLEIDTNLGGGFDNTLASVLDTTATAMGSRQLKRWLNRPLRDIAQIQSRQAAVQCLIDADRHATLRDALKAIGDIERILARVALYSARPRDLARLRDALNALPALEHDLAELDEGTAIDALKHHIRPYPELAETLSRALVDNPPVVIRDGGVIGTGFDAELDEYRGLAEHAGDYLVELETRERERTGLVGLKVGYNRVHGYYIEIPRAQAREAPAEYIRRQTLKNAERFIIPELKEFEDKALSAKSRALAREKLLYDGLLETLNVDLQALQGTARALATLDVLACFAERALALDFVRPRLSDQPGLRIRGGRHPVVEHVSDHPFVPNDLMLDETRRLLVITGPNMGGKSTYMRQAALIALLAHTGSCVPADEAEIGPVDRIFTRIGSSDDLAGGRSTFMVEMTETATILHNATEHSLVLMDEIGRGTSTFDGLSLAWASAEHLVERRAFTLFATHYFEMTALTEPYDSVANVHLTAAEHRDGIVFMHRVEEGPASQSYGLQVAQLAGVPPRVVARAREKLATLEQQEVHQAGTRGGLGDSDAAAPQQADLFASAPHPVVEALEKLDLDAISPRQAMALLYEWREQC.

ATP is bound at residue 615–622; it reads GPNMGGKS.

Belongs to the DNA mismatch repair MutS family.

Functionally, this protein is involved in the repair of mismatches in DNA. It is possible that it carries out the mismatch recognition step. This protein has a weak ATPase activity. This chain is DNA mismatch repair protein MutS, found in Chromohalobacter salexigens (strain ATCC BAA-138 / DSM 3043 / CIP 106854 / NCIMB 13768 / 1H11).